A 744-amino-acid chain; its full sequence is Polyribonucleotide nucleotidyltransferase (744 aa).

The Mg(2+) site is built by D515 and D521. The KH domain occupies 581-640 (PRVITVQVPVDKIGEVIGPKGKMINQIQDDTGADISIEDDGTVFIGATDGPSAEAARQAI). In terms of domain architecture, S1 motif spans 652–724 (GERFVGTVVK…PRGKLSLHAV (73 aa)).

This sequence belongs to the polyribonucleotide nucleotidyltransferase family. Mg(2+) serves as cofactor.

The protein resides in the cytoplasm. The catalysed reaction is RNA(n+1) + phosphate = RNA(n) + a ribonucleoside 5'-diphosphate. Functionally, involved in mRNA degradation. Catalyzes the phosphorolysis of single-stranded polyribonucleotides processively in the 3'- to 5'-direction. The polypeptide is Polyribonucleotide nucleotidyltransferase (Beutenbergia cavernae (strain ATCC BAA-8 / DSM 12333 / CCUG 43141 / JCM 11478 / NBRC 16432 / NCIMB 13614 / HKI 0122)).